The following is a 237-amino-acid chain: Oligoribonuclease, mitochondrial (237 aa).

The transit peptide at Met-1–Gly-25 directs the protein to the mitochondrion. Positions Met-43–Leu-207 constitute an Exonuclease domain. Mg(2+) is bound by residues Asp-47 and Glu-49. Phosphoserine is present on Ser-92. The residue at position 122 (Tyr-122) is a Phosphotyrosine. Asp-147 provides a ligand contact to Mg(2+). Lys-173 bears the N6-acetyllysine mark. His-194 is an active-site residue. Residue Asp-199 participates in Mg(2+) binding.

It belongs to the oligoribonuclease family. In terms of assembly, homodimer. Homotetramer. It depends on Mn(2+) as a cofactor. Mg(2+) is required as a cofactor.

The protein localises to the mitochondrion intermembrane space. It localises to the mitochondrion matrix. Its subcellular location is the mitochondrion. It is found in the cytoplasm. The protein resides in the nucleus. In terms of biological role, 3'-to-5'exoribonuclease that preferentially degrades DNA and RNA oligonucleotides composed of only two nucleotides. Binds and degrades longer oligonucleotides with a lower affinity. Plays dual roles in mitochondria, scavenging nanoRNAs (small RNA oligonucleotides of &lt;5 nucleotides) that are produced by the degradosome and clearing short RNAs that are generated by RNA processing. Essential for correct initiation of mitochondrial transcription, degrading mitochondrial RNA dinucleotides to prevent RNA-primed transcription at non-canonical sites in the mitochondrial genome. Essential for embryonic development. The chain is Oligoribonuclease, mitochondrial (Rexo2) from Mus musculus (Mouse).